A 500-amino-acid chain; its full sequence is Ephrin type-B receptor 3 (500 aa).

One can recognise a Fibronectin type-III domain in the interval 1–64; that stretch reads PLLVLDLIIQ…NPVDFSTSLY (64 aa). Over 1 to 113 the chain is Extracellular; that stretch reads PLLVLDLIIQ…ERSVQDLLPL (113 aa). Residues 76 to 103 are disordered; that stretch reads HLRRREELTTTTTGLKSREERFQKSDDP. Basic and acidic residues predominate over residues 91–103; that stretch reads KSREERFQKSDDP. Residues 114–134 traverse the membrane as a helical segment; the sequence is IVGSASAGFVVILAMIVIAVV. Topologically, residues 135 to 500 are cytoplasmic; that stretch reads CLRRQRTGSE…QMSQTLPIRV (366 aa). Tyr-168 bears the Phosphotyrosine; by autocatalysis mark. The Protein kinase domain occupies 187 to 450; the sequence is VKIEEVIGAG…QIVSTLDKFL (264 aa). Residues 193–201 and Lys-219 contribute to the ATP site; that span reads IGAGEFGEV. Asp-312 serves as the catalytic Proton acceptor. The region spanning 421-500 is the SAM domain; that stretch reads LHQLMLECWV…QMSQTLPIRV (80 aa). Positions 498–500 match the PDZ-binding motif; that stretch reads IRV.

This sequence belongs to the protein kinase superfamily. Tyr protein kinase family. Ephrin receptor subfamily. In terms of assembly, heterotetramer upon binding of the ligand. The heterotetramer is composed of an ephrin dimer and a receptor dimer. Oligomerization is probably required to induce biological responses. Phosphorylated. Autophosphorylates upon ligand-binding. Autophosphorylation on Tyr-168 is required for interaction with SH2 domain-containing proteins. Widely expressed in the developing nervous system.

Its subcellular location is the cell membrane. It localises to the cell projection. The protein localises to the dendrite. It catalyses the reaction L-tyrosyl-[protein] + ATP = O-phospho-L-tyrosyl-[protein] + ADP + H(+). In terms of biological role, receptor tyrosine kinase which binds promiscuously transmembrane ephrin-B family ligands residing on adjacent cells, leading to contact-dependent bidirectional signaling into neighboring cells. The signaling pathway downstream of the receptor is referred to as forward signaling while the signaling pathway downstream of the ephrin ligand is referred to as reverse signaling. Generally has an overlapping and redundant function with EPHB2. Like EPHB2, functions in axon guidance during development. In addition to its role in axon guidance also plays an important redundant role with other ephrin-B receptors in development and maturation of dendritic spines and the formation of excitatory synapses. May control other aspects of development through regulation of cell migration and positioning. May play a role in early pattern formation within the developing nervous system. The sequence is that of Ephrin type-B receptor 3 (ephb3) from Danio rerio (Zebrafish).